The chain runs to 765 residues: Phosphoribosylformylglycinamidine synthase subunit PurL (765 aa).

Over residues 1–13 (MTVSPTSAPTQAI) the composition is skewed to polar residues. The disordered stretch occupies residues 1 to 32 (MTVSPTSAPTQAIDTVERAATTPDEPQPFGEL). Residue His-65 is part of the active site. Positions 68 and 112 each coordinate ATP. Residue Glu-114 coordinates Mg(2+). Substrate-binding positions include 115-118 (SHNH) and Arg-137. His-116 (proton acceptor) is an active-site residue. Asp-138 is a Mg(2+) binding site. Substrate is bound at residue Gln-263. Asp-291 serves as a coordination point for Mg(2+). 335-337 (ESQ) contributes to the substrate binding site. 2 residues coordinate ATP: Asn-523 and Gly-560. Asn-561 contacts Mg(2+). Position 563 (Ser-563) interacts with substrate.

Belongs to the FGAMS family. Monomer. Part of the FGAM synthase complex composed of 1 PurL, 1 PurQ and 2 PurS subunits.

The protein resides in the cytoplasm. The enzyme catalyses N(2)-formyl-N(1)-(5-phospho-beta-D-ribosyl)glycinamide + L-glutamine + ATP + H2O = 2-formamido-N(1)-(5-O-phospho-beta-D-ribosyl)acetamidine + L-glutamate + ADP + phosphate + H(+). The protein operates within purine metabolism; IMP biosynthesis via de novo pathway; 5-amino-1-(5-phospho-D-ribosyl)imidazole from N(2)-formyl-N(1)-(5-phospho-D-ribosyl)glycinamide: step 1/2. Functionally, part of the phosphoribosylformylglycinamidine synthase complex involved in the purines biosynthetic pathway. Catalyzes the ATP-dependent conversion of formylglycinamide ribonucleotide (FGAR) and glutamine to yield formylglycinamidine ribonucleotide (FGAM) and glutamate. The FGAM synthase complex is composed of three subunits. PurQ produces an ammonia molecule by converting glutamine to glutamate. PurL transfers the ammonia molecule to FGAR to form FGAM in an ATP-dependent manner. PurS interacts with PurQ and PurL and is thought to assist in the transfer of the ammonia molecule from PurQ to PurL. This chain is Phosphoribosylformylglycinamidine synthase subunit PurL, found in Mycolicibacterium paratuberculosis (strain ATCC BAA-968 / K-10) (Mycobacterium paratuberculosis).